We begin with the raw amino-acid sequence, 131 residues long: Large ribosomal subunit protein bL17 (131 aa).

This sequence belongs to the bacterial ribosomal protein bL17 family. In terms of assembly, part of the 50S ribosomal subunit. Contacts protein L32.

This chain is Large ribosomal subunit protein bL17, found in Methylacidiphilum infernorum (isolate V4) (Methylokorus infernorum (strain V4)).